Reading from the N-terminus, the 48-residue chain is ATP synthase protein 8 (48 aa).

A helical transmembrane segment spans residues 13–32 (VVFTLISLSFIFFVFSKYIL).

It belongs to the ATPase protein 8 family. As to quaternary structure, F-type ATPases have 2 components, CF(1) - the catalytic core - and CF(0) - the membrane proton channel.

The protein resides in the mitochondrion membrane. Mitochondrial membrane ATP synthase (F(1)F(0) ATP synthase or Complex V) produces ATP from ADP in the presence of a proton gradient across the membrane which is generated by electron transport complexes of the respiratory chain. F-type ATPases consist of two structural domains, F(1) - containing the extramembraneous catalytic core and F(0) - containing the membrane proton channel, linked together by a central stalk and a peripheral stalk. During catalysis, ATP synthesis in the catalytic domain of F(1) is coupled via a rotary mechanism of the central stalk subunits to proton translocation. Part of the complex F(0) domain. Minor subunit located with subunit a in the membrane. The sequence is that of ATP synthase protein 8 (ATP8) from Trichophyton rubrum (Athlete's foot fungus).